The chain runs to 528 residues: Calcium-dependent protein kinase 17 (528 aa).

Residues 1–65 (MGNCCSHGRD…GPIGPVLGRP (65 aa)) form a disordered region. Gly2 carries the N-myristoyl glycine lipid modification. Residues 20–45 (NGASASNAANSTGPTAEASVPQSKHA) show a composition bias toward low complexity. Residues 73-331 (YSLGKELGRG…AAQVLNHPWI (259 aa)) form the Protein kinase domain. ATP contacts are provided by residues 79–87 (LGRGQFGVT) and Lys102. Asp197 acts as the Proton acceptor in catalysis. The residue at position 237 (Ser237) is a Phosphoserine. Residues 337–367 (APDVPLDNAVMSRLKQFKAMNNFKKVALRVI) form an autoinhibitory domain region. EF-hand domains are found at residues 374-409 (EEIM…QGTR), 410-445 (LSEY…INRL), 446-481 (DREE…FGMN), and 485-516 (DIKE…GNPD). Ca(2+) contacts are provided by Asp387, Asp389, Ser391, Thr393, Glu398, Asp423, Asp425, Asn427, Thr429, Glu434, Asp459, Asp461, Ser463, Tyr465, Glu470, Asp494, Asp496, Asp498, Arg500, and Glu505.

It belongs to the protein kinase superfamily. Ser/Thr protein kinase family. CDPK subfamily.

The protein localises to the membrane. It carries out the reaction L-seryl-[protein] + ATP = O-phospho-L-seryl-[protein] + ADP + H(+). It catalyses the reaction L-threonyl-[protein] + ATP = O-phospho-L-threonyl-[protein] + ADP + H(+). Activated by calcium. Autophosphorylation may play an important role in the regulation of the kinase activity. In terms of biological role, may play a role in signal transduction pathways that involve calcium as a second messenger. This is Calcium-dependent protein kinase 17 (CPK17) from Arabidopsis thaliana (Mouse-ear cress).